Reading from the N-terminus, the 128-residue chain is uncharacterized protein (128 aa).

A disordered region spans residues 1-50; it reads MSNEQGKGMGFFGNKGKPASEKKDEKKTKLDLDYKPDLNPSTPYDPTLPV. Over residues 18–36 the composition is skewed to basic and acidic residues; it reads PASEKKDEKKTKLDLDYKP.

This is an uncharacterized protein from Bacillus anthracis.